The following is a 597-amino-acid chain: Kelch-like protein 21 (597 aa).

The region spanning 35 to 103 (LDVTLEAAGG…SYTGRVAVSG (69 aa)) is the BTB domain. One can recognise a BACK domain in the interval 138–239 (CLDMQDFAEA…RRFYLLAHVE (102 aa)). 6 Kelch repeats span residues 287-335 (ILVL…ALGN), 336-382 (DIYV…VLDG), 384-422 (LYVV…ACRG), 424-463 (LYAI…SFAP), 464-512 (KTVT…VLGG), and 513-560 (KLYV…SIFR). The segment at 570–597 (GRGFELDGGSSDMDVGQPRPPQNPAELH) is disordered. A compositionally biased stretch (pro residues) spans 587 to 597 (PRPPQNPAELH).

Component of the BCR(KLHL21) E3 ubiquitin ligase complex, at least composed of CUL3, KLHL21 and RBX1.

Its subcellular location is the cytoplasm. The protein localises to the cytoskeleton. It is found in the spindle. It participates in protein modification; protein ubiquitination. Its function is as follows. Substrate-specific adapter of a BCR (BTB-CUL3-RBX1) E3 ubiquitin-protein ligase complex required for efficient chromosome alignment and cytokinesis. The BCR(KLHL21) E3 ubiquitin ligase complex regulates localization of the chromosomal passenger complex (CPC) from chromosomes to the spindle midzone in anaphase and mediates the ubiquitination of AURKB. Ubiquitination of AURKB by BCR(KLHL21) E3 ubiquitin ligase complex may not lead to its degradation by the proteasome. The protein is Kelch-like protein 21 (KLHL21) of Bos taurus (Bovine).